An 82-amino-acid polypeptide reads, in one-letter code: Small ribosomal subunit protein bS16 (82 aa).

Belongs to the bacterial ribosomal protein bS16 family.

The protein is Small ribosomal subunit protein bS16 of Gloeothece citriformis (strain PCC 7424) (Cyanothece sp. (strain PCC 7424)).